Reading from the N-terminus, the 518-residue chain is Two-component response regulator-like PRR1 (518 aa).

In terms of domain architecture, Response regulatory spans 29–147 (RILLCDSDPS…ELLNLWTHVW (119 aa)). Disordered regions lie at residues 172–241 (PSDA…PGVM), 266–305 (TPTTSSFDSELQKGGNRLDSSDHRGNFSSTTDRSDTGTDV), and 483–518 (VRQANYTDITSTGDDISEDEDDDPSSREVEMVSSPE). Residues 196–212 (NQETSTSNQHEYESNPS) are compositionally biased toward polar residues. Residues 443–485 (RAAALAKFRLKRKERCFDKKVRYVNRKKLAETRPRVRGQFVRQ) form the CCT domain.

It belongs to the ARR-like family. In terms of assembly, interacts with PIL13. Interacts with PIL15.

Its subcellular location is the nucleus. Functionally, controls photoperiodic flowering response. Seems to be one of the component of the circadian clock. Expression of several members of the ARR-like family is controlled by circadian rhythm. The particular coordinated sequential expression of PRR73, PRR37, PRR95, PRR59 and PPR1 result to circadian waves that may be at the basis of the endogenous circadian clock. The chain is Two-component response regulator-like PRR1 (PRR1) from Oryza sativa subsp. japonica (Rice).